The primary structure comprises 139 residues: Probable disulfide formation protein C 1 (139 aa).

Residues 8–27 (EYALFTAWGASFIATLGSLY) form a helical membrane-spanning segment. Cysteines 37 and 40 form a disulfide. 2 consecutive transmembrane segments (helical) span residues 42–61 (YQRI…VVKK) and 68–85 (YSLP…YHYA). C99 and C104 form a disulfide bridge. The chain crosses the membrane as a helical span at residues 113–135 (GFVTIPFLALIGFITIAVCSFIV).

This sequence belongs to the DsbB family. BdbC subfamily.

It localises to the cell membrane. Its function is as follows. Required for disulfide bond formation in some proteins. This chain is Probable disulfide formation protein C 1 (bdbC1), found in Bacillus cereus (strain ATCC 10987 / NRS 248).